The chain runs to 493 residues: Ketol-acid reductoisomerase (NADP(+)) (493 aa).

A KARI N-terminal Rossmann domain is found at 14–208 (LDQLGRCRFM…GGHRAGVLES (195 aa)). NADP(+)-binding positions include 45 to 48 (CGAQ), Arg68, Arg76, Ser78, and 108 to 110 (DKQ). The active site involves His132. Gly158 contributes to the NADP(+) binding site. 2 KARI C-terminal knotted domains span residues 209–345 (SFVA…APKG) and 346–486 (ENIK…MTDM). Mg(2+) contacts are provided by Asp217, Glu221, Glu390, and Glu394. Residue Ser415 participates in substrate binding.

This sequence belongs to the ketol-acid reductoisomerase family. The cofactor is Mg(2+).

The enzyme catalyses (2R)-2,3-dihydroxy-3-methylbutanoate + NADP(+) = (2S)-2-acetolactate + NADPH + H(+). It catalyses the reaction (2R,3R)-2,3-dihydroxy-3-methylpentanoate + NADP(+) = (S)-2-ethyl-2-hydroxy-3-oxobutanoate + NADPH + H(+). The protein operates within amino-acid biosynthesis; L-isoleucine biosynthesis; L-isoleucine from 2-oxobutanoate: step 2/4. It participates in amino-acid biosynthesis; L-valine biosynthesis; L-valine from pyruvate: step 2/4. In terms of biological role, involved in the biosynthesis of branched-chain amino acids (BCAA). Catalyzes an alkyl-migration followed by a ketol-acid reduction of (S)-2-acetolactate (S2AL) to yield (R)-2,3-dihydroxy-isovalerate. In the isomerase reaction, S2AL is rearranged via a Mg-dependent methyl migration to produce 3-hydroxy-3-methyl-2-ketobutyrate (HMKB). In the reductase reaction, this 2-ketoacid undergoes a metal-dependent reduction by NADPH to yield (R)-2,3-dihydroxy-isovalerate. This chain is Ketol-acid reductoisomerase (NADP(+)), found in Histophilus somni (strain 2336) (Haemophilus somnus).